The sequence spans 379 residues: Odorant receptor 23a (379 aa).

The Cytoplasmic segment spans residues 1 to 36 (MKLSETLKIDYFRVQLNAWRICGALDLSEGRYWSWS). The helical transmembrane segment at 37 to 57 (MLLCILVYLPTPMLLRGVYSF) threads the bilayer. At 58 to 64 (EDPVENN) the chain is on the extracellular side. An N-linked (GlcNAc...) asparagine glycan is attached at asparagine 64. Residues 65-85 (FSLSLTVTSLSNLMKFCMYVA) form a helical membrane-spanning segment. At 86–125 (QLTKMVEVQSLIGQLDARVSGESQSERHRNMTEHLLRMSK) the chain is on the cytoplasmic side. A helical membrane pass occupies residues 126-146 (LFQITYAVVFIIAAVPFVFET). At 147–162 (ELSLPMPMWFPFDWKN) the chain is on the extracellular side. A helical membrane pass occupies residues 163–183 (SMVAYIGALVFQEIGYVFQIM). Topologically, residues 184 to 253 (QCFAADSFPP…TKSLVSYPMM (70 aa)) are cytoplasmic. A helical membrane pass occupies residues 254 to 274 (VQFMVIGINIAITLFVLIFYV). Over 275–280 (ETLYDR) the chain is Extracellular. A helical transmembrane segment spans residues 281-301 (IYYLCFLLGITVQTYPLCYYG). The Cytoplasmic segment spans residues 302–340 (TMVQESFAELHYAVFCSNWVDQSASYRGHMLILAERTKR). Residues 341-361 (MQLLLAGNLVPIHLSTYVACW) traverse the membrane as a helical segment. Over 362–379 (KGAYSFFTLMADRDGLGS) the chain is Extracellular.

It belongs to the insect chemoreceptor superfamily. Heteromeric odorant receptor channel (TC 1.A.69) family. Or2a subfamily. Interacts with Orco. Complexes exist early in the endomembrane system in olfactory sensory neurons (OSNs), coupling these complexes to the conserved ciliary trafficking pathway. In terms of tissue distribution, expressed in 10-40 sensory cells in the third antenna segment and in the maxillary palp.

Its subcellular location is the cell membrane. Functionally, odorant receptor which mediates acceptance or avoidance behavior, depending on its substrates. The odorant receptor repertoire encodes a large collection of odor stimuli that vary widely in identity, intensity, and duration. May form a complex with Orco to form odorant-sensing units, providing sensitive and prolonged odorant signaling and calcium permeability. The sequence is that of Odorant receptor 23a (Or23a) from Drosophila melanogaster (Fruit fly).